The chain runs to 139 residues: Transcription antitermination protein NusB (139 aa).

The protein belongs to the NusB family.

Involved in transcription antitermination. Required for transcription of ribosomal RNA (rRNA) genes. Binds specifically to the boxA antiterminator sequence of the ribosomal RNA (rrn) operons. The sequence is that of Transcription antitermination protein NusB from Idiomarina loihiensis (strain ATCC BAA-735 / DSM 15497 / L2-TR).